A 1124-amino-acid polypeptide reads, in one-letter code: Sodium/hydrogen exchanger 11 (1124 aa).

11 helical membrane-spanning segments follow: residues 25–45, 52–72, 90–110, 120–140, 179–199, 224–244, 254–274, 305–325, 335–355, 372–392, and 405–425; these read LVEE…GGLL, CEVI…HMAY, FSLY…DVEF, VLLT…YVVI, IYID…SIFF, DILG…CILA, IILC…LGMS, IFSS…IGCG, IPFI…TILL, GVVI…APDV, and MFIL…SYVM. Residues asparagine 447 and asparagine 473 are each glycosylated (N-linked (GlcNAc...) asparagine). The next 4 membrane-spanning stretches (helical) occupy residues 612-632, 641-661, 674-694, and 706-726; these read TGQI…WPMA, ISIN…KIII, LEFF…FVKL, and VIMG…IVPI. Positions 642-723 are ion transport-like; sequence SINYYFMFLY…IRFLPLFKII (82 aa). 867-999 lines the a nucleoside 3',5'-cyclic phosphate pocket; that stretch reads IWLEGKDVLI…EYKIWLKLAL (133 aa).

Belongs to the monovalent cation:proton antiporter 1 (CPA1) transporter (TC 2.A.36) family.

The protein resides in the membrane. Its function is as follows. Involved in pH regulation. In Homo sapiens (Human), this protein is Sodium/hydrogen exchanger 11 (SLC9C2).